Here is a 355-residue protein sequence, read N- to C-terminus: MRCGPKGLNMIVIDGSQGEGGGQILRTALSLSMVTGQPFTIEKIRANRERGGLLRQHLTAVLAAAEISGANVTGAELGSRTLTFAPQRVTPGDYSFAVGTAGSATLVLQTLLPALMLANKPSNVVVEGGTHNMAAPPFDFLAKTFAPIIESMGPKLKLTLDRYGFYPAGGGKITAEIEPVEKLKQLELLDRGEVLQQNAVALLAHLPRHIADRELETASNILGLAPESTRILGTKNSAGPGNALMIEVQTERHTEIFTAFGKVGISAEKVAEEAAVAAAQYVASSAFACEHLADQLLLPIALAGGGSFTAVRQTMHARTNIEIIRLFLPVSFEISEEENCARVALSTRDRAGVSA.

ATP-binding positions include Gln109 and 291–295 (HLADQ). The active-site Tele-AMP-histidine intermediate is His316.

The protein belongs to the RNA 3'-terminal cyclase family. Type 1 subfamily.

The protein localises to the cytoplasm. It catalyses the reaction a 3'-end 3'-phospho-ribonucleotide-RNA + ATP = a 3'-end 2',3'-cyclophospho-ribonucleotide-RNA + AMP + diphosphate. Its function is as follows. Catalyzes the conversion of 3'-phosphate to a 2',3'-cyclic phosphodiester at the end of RNA. The mechanism of action of the enzyme occurs in 3 steps: (A) adenylation of the enzyme by ATP; (B) transfer of adenylate to an RNA-N3'P to produce RNA-N3'PP5'A; (C) and attack of the adjacent 2'-hydroxyl on the 3'-phosphorus in the diester linkage to produce the cyclic end product. The biological role of this enzyme is unknown but it is likely to function in some aspects of cellular RNA processing. This chain is RNA 3'-terminal phosphate cyclase, found in Koribacter versatilis (strain Ellin345).